A 260-amino-acid polypeptide reads, in one-letter code: Imidazole glycerol phosphate synthase subunit HisF (260 aa).

Active-site residues include aspartate 11 and aspartate 130.

Belongs to the HisA/HisF family. As to quaternary structure, heterodimer of HisH and HisF.

It is found in the cytoplasm. It catalyses the reaction 5-[(5-phospho-1-deoxy-D-ribulos-1-ylimino)methylamino]-1-(5-phospho-beta-D-ribosyl)imidazole-4-carboxamide + L-glutamine = D-erythro-1-(imidazol-4-yl)glycerol 3-phosphate + 5-amino-1-(5-phospho-beta-D-ribosyl)imidazole-4-carboxamide + L-glutamate + H(+). Its pathway is amino-acid biosynthesis; L-histidine biosynthesis; L-histidine from 5-phospho-alpha-D-ribose 1-diphosphate: step 5/9. Its function is as follows. IGPS catalyzes the conversion of PRFAR and glutamine to IGP, AICAR and glutamate. The HisF subunit catalyzes the cyclization activity that produces IGP and AICAR from PRFAR using the ammonia provided by the HisH subunit. In Psychrobacter cryohalolentis (strain ATCC BAA-1226 / DSM 17306 / VKM B-2378 / K5), this protein is Imidazole glycerol phosphate synthase subunit HisF.